We begin with the raw amino-acid sequence, 388 residues long: UPF0496 protein 1 (388 aa).

The tract at residues 1–25 is disordered; the sequence is MGNSSSSGSHRPPRPASSESALPPA. A coiled-coil region spans residues 198 to 227; the sequence is QAVYRQQLTMLEKLQQRKHRLDKKVRAIKA. 2 helical membrane passes run 234-254 and 257-277; these read IIFA…AAIA and PVAA…GKWI. The stretch at 344 to 376 forms a coiled coil; it reads VEEIKKKLEVFMKSVEDLGEQADRCSRDIRRAR.

This sequence belongs to the UPF0496 family.

Its subcellular location is the membrane. The polypeptide is UPF0496 protein 1 (Oryza sativa subsp. japonica (Rice)).